Reading from the N-terminus, the 676-residue chain is Forkhead box protein biniou (676 aa).

Disordered stretches follow at residues Tyr22–Tyr50, Ala131–Thr160, Gln203–Ser232, Asn249–Pro312, and Ile583–Pro651. The segment covering Pro34–His48 has biased composition (basic residues). Positions Ser133–Thr160 are enriched in polar residues. Residues Gln203–Gln220 show a composition bias toward low complexity. Positions Pro257 to His273 are enriched in polar residues. The fork-head DNA-binding region spans Lys311–Arg408. A compositionally biased stretch (low complexity) spans Ile583–Gln593. Residues Ala594–Gln611 are compositionally biased toward basic residues. Residues Gly612–Thr625 show a composition bias toward low complexity. Residues Gly637–Pro647 are compositionally biased toward basic and acidic residues.

As to quaternary structure, binds to DNA. In terms of tissue distribution, in embryo, expressed in all types of visceral muscles and their progenitors (at protein level). In late stage 10 embryo, expressed in the caudal visceral mesoderm and trunk and hindgut visceral mesoderm progenitors.

It is found in the nucleus. Functionally, component of a regulatory network controlling visceral mesoderm development and midgut morphogenesis. Transcriptional regulator involved in the activation of a large number of genes in the visceral mesoderm including betaTub60D, dpp and Hand. Binds to and regulates a number of enhancers driving expression in the visceral mesoderm in a temporally and spatially restricted manner. Also to binds to enhancers cooperatively with activators, such as bap or HLH54F, to coregulate expression of shared target genes in the visceral mesoderm. Binds to the Ndg enhancer and drives expression of Ndg in the late visceral musculature. May be involved in the transcriptional regulation of wupA in the visceral mesoderm. Plays an indirect role in the later stages of salivary gland positioning. This is Forkhead box protein biniou (bin) from Drosophila melanogaster (Fruit fly).